We begin with the raw amino-acid sequence, 62 residues long: Photosystem II reaction center protein Z (62 aa).

The next 2 membrane-spanning stretches (helical) occupy residues 8–28 and 41–61; these read ALAA…VAYA and FLGS…NFLV.

It belongs to the PsbZ family. In terms of assembly, PSII is composed of 1 copy each of membrane proteins PsbA, PsbB, PsbC, PsbD, PsbE, PsbF, PsbH, PsbI, PsbJ, PsbK, PsbL, PsbM, PsbT, PsbX, PsbY, PsbZ, Psb30/Ycf12, peripheral proteins PsbO, CyanoQ (PsbQ), PsbU, PsbV and a large number of cofactors. It forms dimeric complexes.

The protein resides in the cellular thylakoid membrane. Functionally, may control the interaction of photosystem II (PSII) cores with the light-harvesting antenna, regulates electron flow through the 2 photosystem reaction centers. PSII is a light-driven water plastoquinone oxidoreductase, using light energy to abstract electrons from H(2)O, generating a proton gradient subsequently used for ATP formation. The protein is Photosystem II reaction center protein Z of Cyanothece sp. (strain PCC 7425 / ATCC 29141).